The primary structure comprises 129 residues: Glycine cleavage system H protein (129 aa).

The region spanning 24-106 (AVRIGLSAYA…HGEGWLLVIQ (83 aa)) is the Lipoyl-binding domain. At Lys65 the chain carries N6-lipoyllysine.

It belongs to the GcvH family. The glycine cleavage system is composed of four proteins: P, T, L and H. It depends on (R)-lipoate as a cofactor.

Functionally, the glycine cleavage system catalyzes the degradation of glycine. The H protein shuttles the methylamine group of glycine from the P protein to the T protein. This Synechococcus sp. (strain WH7803) protein is Glycine cleavage system H protein.